The following is a 226-amino-acid chain: PKHD-type hydroxylase MADE_1018490 (226 aa).

One can recognise a Fe2OG dioxygenase domain in the interval 77 to 177 (RIFPPCFNRY…RIAAITWIQS (101 aa)). Residues histidine 95, aspartate 97, and histidine 158 each contribute to the Fe cation site. Arginine 168 contacts 2-oxoglutarate.

Fe(2+) is required as a cofactor. The cofactor is L-ascorbate.

This Alteromonas mediterranea (strain DSM 17117 / CIP 110805 / LMG 28347 / Deep ecotype) protein is PKHD-type hydroxylase MADE_1018490.